The chain runs to 603 residues: Probable methyltransferase-like protein 25 (603 aa).

A disordered region spans residues T326–E352.

Probable methyltransferase. The polypeptide is Probable methyltransferase-like protein 25 (METTL25) (Homo sapiens (Human)).